We begin with the raw amino-acid sequence, 242 residues long: C-reactive protein 1.1 (242 aa).

Residues 1–24 (MKTFHGPTCGTAVSLCLLLFLTSA) form the signal peptide. The Pentraxin (PTX) domain maps to 30-241 (ITSKVKFPPS…GVVLSPNEIC (212 aa)). Thr-60 and Tyr-63 together coordinate phosphocholine. 2 disulfides stabilise this stretch: Cys-62/Cys-125 and Cys-112/Cys-144. 2 residues coordinate Ca(2+): Asp-85 and Asn-86. Asn-147 carries N-linked (GlcNAc...) asparagine glycosylation. Ca(2+) is bound by residues Gln-169, Asp-170, and Gln-180. Cys-207 and Cys-241 are disulfide-bonded.

The protein belongs to the pentraxin family. In terms of assembly, homopentamer. Pentraxin (or pentaxin) have a discoid arrangement of 5 non-covalently bound subunits. Ca(2+) is required as a cofactor.

It localises to the secreted. Functionally, might serve the role of immunoglobulins. The polypeptide is C-reactive protein 1.1 (Limulus polyphemus (Atlantic horseshoe crab)).